The sequence spans 170 residues: Ribosome-binding factor A (170 aa).

The segment at 123–170 is disordered; the sequence is AKAGVYAGDEDPYVKPRVIGEDEDDDDEEGDEDGDDVDRSAPGYEPAH. Over residues 143 to 158 the composition is skewed to acidic residues; the sequence is EDEDDDDEEGDEDGDD.

The protein belongs to the RbfA family. As to quaternary structure, monomer. Binds 30S ribosomal subunits, but not 50S ribosomal subunits or 70S ribosomes.

It localises to the cytoplasm. Functionally, one of several proteins that assist in the late maturation steps of the functional core of the 30S ribosomal subunit. Associates with free 30S ribosomal subunits (but not with 30S subunits that are part of 70S ribosomes or polysomes). Required for efficient processing of 16S rRNA. May interact with the 5'-terminal helix region of 16S rRNA. This Clavibacter sepedonicus (Clavibacter michiganensis subsp. sepedonicus) protein is Ribosome-binding factor A.